The chain runs to 123 residues: uncharacterized protein (123 aa).

The interval 17-74 (FQKKKKTGSQTRRTLKPQPQQLQQNLPKGHETTGHTYERVLQQQGSQERSPGLMSEDS) is disordered. Position 30 is a phosphothreonine (T30). Residues 32–43 (KPQPQQLQQNLP) are compositionally biased toward low complexity. Residues 44-54 (KGHETTGHTYE) show a composition bias toward basic and acidic residues. S62 bears the Phosphoserine mark.

This is an uncharacterized protein from Homo sapiens (Human).